The following is a 68-amino-acid chain: MSLELLSKLETKIQAALETIELLKMELEEEKQKNHTLNEQNQQLSQDLTSWNEKVTGLVGLLNDEVSE.

Residues Leu3–Leu58 are a coiled coil.

The protein belongs to the ZapB family. Homodimer. The ends of the coiled-coil dimer bind to each other, forming polymers. Interacts with FtsZ.

It localises to the cytoplasm. Non-essential, abundant cell division factor that is required for proper Z-ring formation. It is recruited early to the divisome by direct interaction with FtsZ, stimulating Z-ring assembly and thereby promoting cell division earlier in the cell cycle. Its recruitment to the Z-ring requires functional FtsA or ZipA. The protein is Cell division protein ZapB of Shewanella loihica (strain ATCC BAA-1088 / PV-4).